The chain runs to 309 residues: D-alanine--D-alanine ligase (309 aa).

The 203-residue stretch at lysine 104–glutamate 306 folds into the ATP-grasp domain. Position 137 to 192 (isoleucine 137 to threonine 192) interacts with ATP. 3 residues coordinate Mg(2+): aspartate 260, glutamate 273, and asparagine 275.

The protein belongs to the D-alanine--D-alanine ligase family. Mg(2+) serves as cofactor. The cofactor is Mn(2+).

The protein resides in the cytoplasm. The catalysed reaction is 2 D-alanine + ATP = D-alanyl-D-alanine + ADP + phosphate + H(+). It participates in cell wall biogenesis; peptidoglycan biosynthesis. Its function is as follows. Cell wall formation. The protein is D-alanine--D-alanine ligase of Buchnera aphidicola subsp. Baizongia pistaciae (strain Bp).